A 714-amino-acid chain; its full sequence is Methylmalonyl-CoA mutase (714 aa).

One can recognise a B12-binding domain in the interval 584-714; it reads RPRILIAKMG…VLNLISQHHD (131 aa). His-597 serves as a coordination point for adenosylcob(III)alamin.

It belongs to the methylmalonyl-CoA mutase family. Homodimer. Interacts with ArgK. Adenosylcob(III)alamin serves as cofactor.

The enzyme catalyses (R)-methylmalonyl-CoA = succinyl-CoA. In terms of biological role, catalyzes the interconversion of succinyl-CoA and methylmalonyl-CoA. Could be part of a pathway that converts succinate to propionate. The chain is Methylmalonyl-CoA mutase (scpA) from Escherichia coli (strain K12).